The chain runs to 287 residues: ATP synthase gamma chain (287 aa).

It belongs to the ATPase gamma chain family. In terms of assembly, F-type ATPases have 2 components, CF(1) - the catalytic core - and CF(0) - the membrane proton channel. CF(1) has five subunits: alpha(3), beta(3), gamma(1), delta(1), epsilon(1). CF(0) has three main subunits: a, b and c.

The protein resides in the cell inner membrane. In terms of biological role, produces ATP from ADP in the presence of a proton gradient across the membrane. The gamma chain is believed to be important in regulating ATPase activity and the flow of protons through the CF(0) complex. In Xylella fastidiosa (strain M12), this protein is ATP synthase gamma chain.